We begin with the raw amino-acid sequence, 872 residues long: Lysosomal cholesterol signaling protein (872 aa).

At 1 to 40 the chain is on the lumenal side; sequence MNSFSNLPAENLTIAVNMTKTLPTAVMHGFNSTNDPPSMS. The segment at 3 to 372 is PIN-like transporter; sequence SFSNLPAENL…SAWLLTFPTM (370 aa). Residues Asn11, Asn17, and Asn31 are each glycosylated (N-linked (GlcNAc...) asparagine). Residues 41-61 form a helical membrane-spanning segment; it reads ITRLFPALLECFGIVLCGYIA. Cholesterol is bound by residues Phe45 and Tyr59. Residues 62–81 lie on the Cytoplasmic side of the membrane; sequence GRANVITSTQAKGLGNFVSR. A helical membrane pass occupies residues 82–102; sequence FALPALLFKNMVVLNFSNVDW. Residues 103-106 are Lumenal-facing; sequence SFLY. The chain crosses the membrane as a helical span at residues 107-127; sequence SILIAKASVFFIVCVLTLLVA. Residues 128-135 lie on the Cytoplasmic side of the membrane; it reads SPDSRFSK. The discontinuously helical transmembrane segment at 136 to 156 threads the bilayer; sequence AGLFPIFATQSNDFALGYPIV. At 157–169 the chain is on the lumenal side; that stretch reads EALYQTTYPEYLQ. Residues 170-190 traverse the membrane as a helical segment; the sequence is YIYLVAPISLMMLNPIGFIFC. Topologically, residues 191–215 are cytoplasmic; it reads EIQKWKDTQNASQNKIKIVGLGLLR. The discontinuously helical transmembrane segment at 216-236 threads the bilayer; it reads VLQNPIVFMVFIGIAFNFILD. The Lumenal segment spans residues 237-245; that stretch reads RKVPVYVEN. Residues 246-266 form a discontinuously helical membrane-spanning segment; it reads FLDGLGNSFSGSALFYLGLTM. The Cytoplasmic portion of the chain corresponds to 267 to 275; that stretch reads VGKIKRLKK. The cholesterol site is built by Gly268, Lys269, and Ile270. Residues 276–296 form a helical membrane-spanning segment; the sequence is SAFVVLILLITAKLLVLPLLC. The Lumenal portion of the chain corresponds to 297 to 317; that stretch reads REMVELLDKGDSVVNHTSLSN. N-linked (GlcNAc...) asparagine glycosylation occurs at Asn311. Residues 318–338 traverse the membrane as a discontinuously helical segment; that stretch reads YAFLYGVFPVAPGVAIFATQF. Residues 339 to 348 are Cytoplasmic-facing; it reads NMEVEIITSG. Residues 349–369 traverse the membrane as a helical segment; the sequence is MVISTFVSAPIMYVSAWLLTF. The Lumenal portion of the chain corresponds to 370-383; the sequence is PTMDPKPLAYAIQN. A GPCR region spans residues 382–719; the sequence is QNVSFDISIV…FGIFGLDKHL (338 aa). The N-linked (GlcNAc...) asparagine glycan is linked to Asn383. The chain crosses the membrane as a helical span at residues 384-404; the sequence is VSFDISIVSLISLIWSQAILL. Topologically, residues 405 to 416 are cytoplasmic; sequence LSKKYKQLPHML. A helical membrane pass occupies residues 417-437; the sequence is TTNLLIAQSIVCAGMMIWNFV. Topologically, residues 438 to 440 are lumenal; sequence KEK. Residues 441 to 461 form a helical membrane-spanning segment; that stretch reads NFVGQILVFVLLYSSLYSTYL. Residues 462-482 are Cytoplasmic-facing; that stretch reads WTGLLAISLFLLKKRERVQIP. Residues 483–503 form a helical membrane-spanning segment; it reads VGIIIISGWGIPALLVGVLLI. Over 504–522 the chain is Lumenal; sequence TGKHSGDSIDSAFFYGKEQ. Residues 523 to 543 form a helical membrane-spanning segment; sequence MITTAVTLFCSILIAGISLMC. Topologically, residues 544–662 are cytoplasmic; the sequence is MNRTAQAGSY…GDQQLTRHVL (119 aa). Residue Arg659 coordinates cholesterol. The helical transmembrane segment at 663-683 threads the bilayer; it reads LCLLLIIGLFANLSSCLWWLF. Residues 684-693 are Lumenal-facing; that stretch reads NQEPGRLYVE. The chain crosses the membrane as a helical span at residues 694 to 714; that stretch reads LQFFCAVFNFGQGFISFGIFG. Over 715-872 the chain is Cytoplasmic; the sequence is LDKHLIILPF…SSPPSHSPKT (158 aa). In terms of domain architecture, DEP spans 759 to 837; that stretch reads YHRDLCIRNI…DEYLFYRFLQ (79 aa).

In terms of assembly, homodimer; via the transporter region and DEP domain. Interacts with the GATOR1 complex; preventing interaction between GATOR1 and KICSTOR; interaction is disrupted upon cholesterol starvation.

The protein resides in the lysosome membrane. In terms of biological role, cholesterol-binding protein that acts as a regulator of mTORC1 signaling pathway. Acts as a sensor of cholesterol to signal cholesterol sufficiency to mTORC1: in presence of cholesterol, binds cholesterol, leading to disruption of the interaction between the GATOR1 and KICSTOR complexes and promotion of mTORC1 signaling. Upon cholesterol starvation, GPR155/LYCHOS is unable to perturb the association between GATOR1 and KICSTOR, leading to mTORC1 signaling inhibition. Binds indole-3-acetic acid and may play a role in tryptophan metabolism. This chain is Lysosomal cholesterol signaling protein (GPR155), found in Pongo abelii (Sumatran orangutan).